The following is a 212-amino-acid chain: Adenylate kinase (212 aa).

10-15 (GAGKGT) contacts ATP. The NMP stretch occupies residues 30 to 59 (AIGDIFRTIIKTSTSEAELINNYVKQGELI). Residues Arg36, 57 to 59 (ELI), 85 to 88 (GYPR), and Gln92 each bind AMP. Residues 122 to 160 (GRYSCKNCGKIYNRYFLQPKTDNVCDVCGSSTFDYRKDD) form an LID region. Arg123 is a binding site for ATP. The Zn(2+) site is built by Cys126 and Cys129. 132–133 (IY) is an ATP binding site. Zn(2+) is bound by residues Cys146 and Cys149. Arg157 and Arg168 together coordinate AMP. Lys196 lines the ATP pocket.

Belongs to the adenylate kinase family. Monomer.

The protein localises to the cytoplasm. It carries out the reaction AMP + ATP = 2 ADP. It functions in the pathway purine metabolism; AMP biosynthesis via salvage pathway; AMP from ADP: step 1/1. In terms of biological role, catalyzes the reversible transfer of the terminal phosphate group between ATP and AMP. Plays an important role in cellular energy homeostasis and in adenine nucleotide metabolism. The polypeptide is Adenylate kinase (Rickettsia africae (strain ESF-5)).